Consider the following 102-residue polypeptide: Small ribosomal subunit protein bS6 (102 aa).

Belongs to the bacterial ribosomal protein bS6 family.

Functionally, binds together with bS18 to 16S ribosomal RNA. The sequence is that of Small ribosomal subunit protein bS6 (rpsF) from Deinococcus radiodurans (strain ATCC 13939 / DSM 20539 / JCM 16871 / CCUG 27074 / LMG 4051 / NBRC 15346 / NCIMB 9279 / VKM B-1422 / R1).